The sequence spans 374 residues: CMP-N-acetylneuraminate-beta-1,4-galactoside alpha-2,3-sialyltransferase (374 aa).

The Cytoplasmic segment spans residues 1–8 (MGLLVFVR). A helical; Signal-anchor for type II membrane protein transmembrane segment spans residues 9 to 28 (NLLLALCLFLVLGFLYYSAW). Over 29–374 (KLHLLQWEDS…RVITDLSSGI (346 aa)) the chain is Lumenal. 2 N-linked (GlcNAc...) asparagine glycosylation sites follow: N79 and N170. A disulfide bridge connects residues C159 and C313.

It belongs to the glycosyltransferase 29 family. Post-translationally, the soluble form derives from the membrane form by proteolytic processing. As to expression, found in all tissues tested. High expression found in brain, liver, kidney, colon, heart and lung.

It localises to the golgi apparatus. It is found in the golgi stack membrane. Its subcellular location is the secreted. It carries out the reaction a beta-D-galactosyl-(1-&gt;4)-N-acetyl-beta-D-glucosaminyl derivative + CMP-N-acetyl-beta-neuraminate = an N-acetyl-alpha-neuraminyl-(2-&gt;3)-beta-D-galactosyl-(1-&gt;4)-N-acetyl-beta-D-glucosaminyl derivative + CMP + H(+). The protein operates within protein modification; protein glycosylation. Its function is as follows. Catalyzes the formation of the NeuAc-alpha-2,3-Gal-beta-1,4-GlcNAc-, NeuAc-alpha-2,3-Gal-beta-1,3-GlcNAc- and NeuAc-alpha-2,3-Gal-beta-1,3-GalNAc- sequences found in terminal carbohydrate groups of glycoproteins and glycolipids. The highest activity is toward Gal-beta-1,3-GlcNAc and the lowest toward Gal-beta-1,3-GalNAc. In Rattus norvegicus (Rat), this protein is CMP-N-acetylneuraminate-beta-1,4-galactoside alpha-2,3-sialyltransferase (St3gal3).